A 305-amino-acid chain; its full sequence is tRNA dimethylallyltransferase (305 aa).

8 to 15 contributes to the ATP binding site; that stretch reads GPTGTGKS. 10–15 contacts substrate; that stretch reads TGTGKS.

The protein belongs to the IPP transferase family. Monomer. Mg(2+) is required as a cofactor.

The enzyme catalyses adenosine(37) in tRNA + dimethylallyl diphosphate = N(6)-dimethylallyladenosine(37) in tRNA + diphosphate. In terms of biological role, catalyzes the transfer of a dimethylallyl group onto the adenine at position 37 in tRNAs that read codons beginning with uridine, leading to the formation of N6-(dimethylallyl)adenosine (i(6)A). This is tRNA dimethylallyltransferase from Mycobacterium sp. (strain JLS).